The primary structure comprises 142 residues: MFLGTHTPRLDDKGRLILPAKFRDELAGGVVITKGQERCLYVFPTPEFQHIADQLRAQPMTHKAARAYSRVFFASAHDEVPDKQGRVTIPGHLREYAALDRDLVVIGAHTRVEIWDRVAWESYLAESEDEFADIEEGVLPGL.

2 SpoVT-AbrB domains span residues 5-47 (THTP…PTPE) and 76-119 (AHDE…DRVA).

The protein belongs to the MraZ family. Forms oligomers.

Its subcellular location is the cytoplasm. It localises to the nucleoid. In Salinispora tropica (strain ATCC BAA-916 / DSM 44818 / JCM 13857 / NBRC 105044 / CNB-440), this protein is Transcriptional regulator MraZ.